The chain runs to 355 residues: Peptide chain release factor 1 (355 aa).

Gln233 carries the post-translational modification N5-methylglutamine.

It belongs to the prokaryotic/mitochondrial release factor family. Methylated by PrmC. Methylation increases the termination efficiency of RF1.

The protein resides in the cytoplasm. Peptide chain release factor 1 directs the termination of translation in response to the peptide chain termination codons UAG and UAA. This Clostridium tetani (strain Massachusetts / E88) protein is Peptide chain release factor 1.